Here is a 304-residue protein sequence, read N- to C-terminus: Mycothiol acetyltransferase (304 aa).

Glu-36 contacts 1D-myo-inositol 2-(L-cysteinylamino)-2-deoxy-alpha-D-glucopyranoside. Acetyl-CoA is bound at residue 73 to 75 (LFV). The region spanning 145-304 (LEIQTYTESV…EEHCVWAKSD (160 aa)) is the N-acetyltransferase domain. Positions 179, 225, and 236 each coordinate 1D-myo-inositol 2-(L-cysteinylamino)-2-deoxy-alpha-D-glucopyranoside. Acetyl-CoA is bound at residue 240–242 (VGL). Tyr-274 provides a ligand contact to 1D-myo-inositol 2-(L-cysteinylamino)-2-deoxy-alpha-D-glucopyranoside. 279–284 (NDPAVK) contributes to the acetyl-CoA binding site.

The protein belongs to the acetyltransferase family. MshD subfamily. As to quaternary structure, monomer.

The enzyme catalyses 1D-myo-inositol 2-(L-cysteinylamino)-2-deoxy-alpha-D-glucopyranoside + acetyl-CoA = mycothiol + CoA + H(+). Catalyzes the transfer of acetyl from acetyl-CoA to desacetylmycothiol (Cys-GlcN-Ins) to form mycothiol. The polypeptide is Mycothiol acetyltransferase (Corynebacterium aurimucosum (strain ATCC 700975 / DSM 44827 / CIP 107346 / CN-1) (Corynebacterium nigricans)).